A 331-amino-acid chain; its full sequence is L-lactate dehydrogenase A chain (331 aa).

NAD(+) is bound by residues 29–57 (GMVGMASAISILLKDLCDELAMVDVMEDK) and Arg-98. Substrate is bound by residues Arg-105, Asn-137, and Arg-168. Asn-137 lines the NAD(+) pocket. Catalysis depends on His-192, which acts as the Proton acceptor. Residue Thr-247 coordinates substrate.

This sequence belongs to the LDH/MDH superfamily. LDH family. In terms of assembly, homotetramer.

Its subcellular location is the cytoplasm. It carries out the reaction (S)-lactate + NAD(+) = pyruvate + NADH + H(+). The protein operates within fermentation; pyruvate fermentation to lactate; (S)-lactate from pyruvate: step 1/1. Interconverts simultaneously and stereospecifically pyruvate and lactate with concomitant interconversion of NADH and NAD(+). This chain is L-lactate dehydrogenase A chain (ldha), found in Patagonotothen tessellata (Black southern cod).